The chain runs to 276 residues: Protein SCO1 homolog 2, mitochondrial (276 aa).

The transit peptide at 1–14 (MLPCRRLVLSCKNQ) directs the protein to the mitochondrion. The chain crosses the membrane as a helical span at residues 66 to 82 (YAVPAILLGFAGFVGFL). One can recognise a Thioredoxin domain in the interval 110-273 (VKGPIIGGPF…SQELLKEVAS (164 aa)).

It belongs to the SCO1/2 family. Expressed in the whole plant with highest expression in imbibed seeds and embryos, and the root hair zone.

Its subcellular location is the mitochondrion inner membrane. Functionally, thought to play a role in cellular copper homeostasis, mitochondrial redox signaling or insertion of copper into the active site of COX. Participates in copper and redox homeostasis. The sequence is that of Protein SCO1 homolog 2, mitochondrial (HCC2) from Arabidopsis thaliana (Mouse-ear cress).